Consider the following 369-residue polypeptide: Phospho-N-acetylmuramoyl-pentapeptide-transferase (369 aa).

The next 10 helical transmembrane spans lie at 2 to 22 (IALLIGAGLALLCALVGTPLF), 55 to 75 (TVVVAAVLLSYGLTHLIMFLM), 86 to 106 (ALILLFLMVGMGLVGFLDDFI), 120 to 140 (AKLILQAAVGVIFAVLALNFP), 163 to 183 (LAFGGTVLGAILFVVWSNLIV), 196 to 216 (LDGLAAGASVMVFGAYTLMGI), 239 to 259 (PLDLALLAAIMSAALVGFLWW), 266 to 286 (IFMGDTGSLAIGGAIAGFAIL), 291 to 311 (LLLGIIGGLFVLITLSVIIQV), and 348 to 368 (ILGGLFVAVGLGIFYAEWVVL).

It belongs to the glycosyltransferase 4 family. MraY subfamily. Requires Mg(2+) as cofactor.

The protein localises to the cell membrane. The catalysed reaction is UDP-N-acetyl-alpha-D-muramoyl-L-alanyl-gamma-D-glutamyl-meso-2,6-diaminopimeloyl-D-alanyl-D-alanine + di-trans,octa-cis-undecaprenyl phosphate = di-trans,octa-cis-undecaprenyl diphospho-N-acetyl-alpha-D-muramoyl-L-alanyl-D-glutamyl-meso-2,6-diaminopimeloyl-D-alanyl-D-alanine + UMP. Its pathway is cell wall biogenesis; peptidoglycan biosynthesis. In terms of biological role, catalyzes the initial step of the lipid cycle reactions in the biosynthesis of the cell wall peptidoglycan: transfers peptidoglycan precursor phospho-MurNAc-pentapeptide from UDP-MurNAc-pentapeptide onto the lipid carrier undecaprenyl phosphate, yielding undecaprenyl-pyrophosphoryl-MurNAc-pentapeptide, known as lipid I. In Pseudarthrobacter chlorophenolicus (strain ATCC 700700 / DSM 12829 / CIP 107037 / JCM 12360 / KCTC 9906 / NCIMB 13794 / A6) (Arthrobacter chlorophenolicus), this protein is Phospho-N-acetylmuramoyl-pentapeptide-transferase.